Reading from the N-terminus, the 820-residue chain is Probable ATP-dependent RNA helicase DDX23 (820 aa).

The span at 1-42 (MAGELADKKDRDASPSKEERKRSRTPDRERDRDRDRKSSPSK) shows a compositional bias: basic and acidic residues. The disordered stretch occupies residues 1-244 (MAGELADKKD…QKIREEKDKS (244 aa)). Phosphoserine occurs at positions 14 and 16. Basic residues predominate over residues 43 to 65 (DRKRHRSRDRRRGGSRSRSRSRS). Residues 66–105 (KSAERERRHKERERDKERDRNKKDRDRDKDGHRRDKDRKR) show a composition bias toward basic and acidic residues. A phosphoserine mark is found at Ser-107 and Ser-109. Basic and acidic residues-rich tracts occupy residues 112 to 137 (RGKDFKSRKDRDSKKDEEDEHGDKKP), 147 to 226 (LLAK…RETN), and 233 to 244 (GRQKIREEKDKS). Positions 391–419 (RSWKDSSLPPHILEVIDKCGYKEPTPIQR) match the Q motif motif. A Helicase ATP-binding domain is found at 422 to 627 (IPIGLQNRDI…RSYLRRPAVV (206 aa)). Position 435 to 442 (435 to 442 (AETGSGKT)) interacts with ATP. A DEAD box motif is present at residues 549 to 552 (DEAD). The Helicase C-terminal domain maps to 651-799 (KRKKLLAILE…SCPPELANHP (149 aa)). Glycyl lysine isopeptide (Lys-Gly) (interchain with G-Cter in SUMO2) cross-links involve residues Lys-686 and Lys-811.

Belongs to the DEAD box helicase family. DDX23/PRP28 subfamily. In terms of assembly, the phosphorylated form (by SRPK2) is a component of the U4/U6-U5 tri-snRNP complex composed of the U4, U6 and U5 snRNAs and at least PRPF3, PRPF4, PRPF6, PRPF8, PRPF31, SNRNP200, TXNL4A, WDR57, SNRNP40, DDX23, CD2BP2, PPIH, SNU13, EFTUD2, SART1 and USP39. Identified in the spliceosome C complex. Interacts with ERBB4. Interacts with ERCC6. Post-translationally, in vitro phosphorylated by CLK1 and U1 snRNP-associated protein kinase. Phosphorylated by SRPK2 and this phosphorylation is required for its association with the tri-snRNP (U4/U6-U5 tri-small nuclear ribonucleoproteins) and subsequent spliceosomal B complex formation. May be phosphorylated by SRPK2 on Ser residues in the SR domain; the phosphorylation is required for the removal of inappropriate R-loops during transcription.

It is found in the nucleus. Its subcellular location is the chromosome. It carries out the reaction ATP + H2O = ADP + phosphate + H(+). Involved in pre-mRNA splicing and its phosphorylated form (by SRPK2) is required for spliceosomal B complex formation. Independently of its spliceosome formation function, required for the suppression of incorrect R-loops formed during transcription; R-loops are composed of a DNA:RNA hybrid and the associated non-template single-stranded DNA. In Homo sapiens (Human), this protein is Probable ATP-dependent RNA helicase DDX23.